The sequence spans 257 residues: Auxin-responsive protein IAA17 (257 aa).

Disordered regions lie at residues 1 to 51 and 85 to 119; these read MSPP…PAAT and GKKA…QVVG. The EAR-like (transcriptional repression) motif lies at 33–37; that stretch reads LRLGL. Residues 105–118 show a composition bias toward low complexity; the sequence is AAAPQAPAAKAQVV. Residues 151-239 form the PB1 domain; sequence FLYVKVSMDG…SCRRLRIMKG (89 aa).

This sequence belongs to the Aux/IAA family. In terms of assembly, homodimers and heterodimers. Highly expressed in etiolated seedlings and flowers. Expressed in roots and green seedlings.

Its subcellular location is the nucleus. In terms of biological role, aux/IAA proteins are short-lived transcriptional factors that function as repressors of early auxin response genes at low auxin concentrations. This chain is Auxin-responsive protein IAA17 (IAA17), found in Oryza sativa subsp. japonica (Rice).